Here is a 264-residue protein sequence, read N- to C-terminus: Thymidylate synthase (264 aa).

Arg-21 provides a ligand contact to dUMP. His-51 is a (6R)-5,10-methylene-5,6,7,8-tetrahydrofolate binding site. A dUMP-binding site is contributed by Arg-126 to Arg-127. Cys-146 serves as the catalytic Nucleophile. Residues Arg-166–Asp-169, Asn-177, and His-207–Tyr-209 each bind dUMP. A (6R)-5,10-methylene-5,6,7,8-tetrahydrofolate-binding site is contributed by Asp-169. Position 263 (Ala-263) interacts with (6R)-5,10-methylene-5,6,7,8-tetrahydrofolate.

It belongs to the thymidylate synthase family. Bacterial-type ThyA subfamily. As to quaternary structure, homodimer.

It localises to the cytoplasm. The enzyme catalyses dUMP + (6R)-5,10-methylene-5,6,7,8-tetrahydrofolate = 7,8-dihydrofolate + dTMP. It functions in the pathway pyrimidine metabolism; dTTP biosynthesis. Functionally, catalyzes the reductive methylation of 2'-deoxyuridine-5'-monophosphate (dUMP) to 2'-deoxythymidine-5'-monophosphate (dTMP) while utilizing 5,10-methylenetetrahydrofolate (mTHF) as the methyl donor and reductant in the reaction, yielding dihydrofolate (DHF) as a by-product. This enzymatic reaction provides an intracellular de novo source of dTMP, an essential precursor for DNA biosynthesis. In Shewanella baltica (strain OS223), this protein is Thymidylate synthase.